We begin with the raw amino-acid sequence, 294 residues long: MKKTLLAAGAVVALSTTFAAGAAENDKPQYLSDWWHQSVNVVGSYHTRFGPQIRNDTYLEYEAFAKKDWFDFYGYIDAPVFFGGNSTAKGIWNKGSPLFMEIEPRFSIDKLTNTDLSFGPFKEWYFANNYIYDMGRNDSQEQSTWYMGLGTDIDTGLPMSLSLNVYAKYQWQNYGASNENEWDGYRFKVKYFVPLTDLWGGSLSYIGFTNFDWGSDLGDDNFYDLNGKHARTSNSIASSHILALNYAHWHYSIVARYFHNGGQWADDAKLNFGDGPFSVRSTGWGGYFVVGYNF.

An N-terminal signal peptide occupies residues 1 to 22 (MKKTLLAAGAVVALSTTFAAGA).

It belongs to the nucleoside-specific channel-forming outer membrane porin (Tsx) (TC 1.B.10) family.

The protein resides in the cell outer membrane. In terms of biological role, functions as a substrate-specific channel for nucleosides and deoxynucleosides. Also functions in albicidin uptake and as receptor for colicin K. Also is a receptor for several Tsx-specific bacteriophages. In Klebsiella pneumoniae, this protein is Nucleoside-specific channel-forming protein Tsx.